Consider the following 363-residue polypeptide: Endopolygalacturonase 1 (363 aa).

Positions 1–17 are cleaved as a signal peptide; sequence MVSYLFVLGALASVAIA. A propeptide spanning residues 18 to 26 is cleaved from the precursor; the sequence is SPVPELKAR. A disulfide bridge links Cys29 with Cys44. 4 PbH1 repeats span residues 188–209, 210–230, 239–260, and 268–290; these read STGV…AVNS, GTNI…SIGS, VKSV…RIKT, and VSDI…VIEQ. The active-site Proton donor is the Asp202. Cys204 and Cys220 are disulfide-bonded. Asn212 is a glycosylation site (N-linked (GlcNAc...) asparagine). His224 is an active-site residue. Disulfide bonds link Cys330-Cys333 and Cys352-Cys363.

The protein belongs to the glycosyl hydrolase 28 family.

The protein localises to the secreted. The catalysed reaction is (1,4-alpha-D-galacturonosyl)n+m + H2O = (1,4-alpha-D-galacturonosyl)n + (1,4-alpha-D-galacturonosyl)m.. Functionally, involved in maceration and soft-rotting of plant tissue. Hydrolyzes the 1,4-alpha glycosidic bonds of de-esterified pectate in the smooth region of the plant cell wall. In Colletotrichum lindemuthianum (Bean anthracnose fungus), this protein is Endopolygalacturonase 1 (PG1).